Consider the following 161-residue polypeptide: Peptidyl-prolyl cis-trans isomerase (161 aa).

The PPIase cyclophilin-type domain maps to 6 to 160; it reads FFDIKAGDER…KKIIIEDCGE (155 aa).

This sequence belongs to the cyclophilin-type PPIase family. PPIase A subfamily. In terms of tissue distribution, found mainly in the tegument, gut epithelium, and muscle layers. Also found in the interior of the parasite.

The catalysed reaction is [protein]-peptidylproline (omega=180) = [protein]-peptidylproline (omega=0). With respect to regulation, binds cyclosporin A (CsA). CsA mediates some of its effects via an inhibitory action on PPIase. PPIases accelerate the folding of proteins. It catalyzes the cis-trans isomerization of proline imidic peptide bonds in oligopeptides. The polypeptide is Peptidyl-prolyl cis-trans isomerase (Schistosoma mansoni (Blood fluke)).